We begin with the raw amino-acid sequence, 101 residues long: Large ribosomal subunit protein uL24 (101 aa).

It belongs to the universal ribosomal protein uL24 family. As to quaternary structure, part of the 50S ribosomal subunit.

Its function is as follows. One of two assembly initiator proteins, it binds directly to the 5'-end of the 23S rRNA, where it nucleates assembly of the 50S subunit. Functionally, one of the proteins that surrounds the polypeptide exit tunnel on the outside of the subunit. The polypeptide is Large ribosomal subunit protein uL24 (Lactococcus lactis subsp. lactis (strain IL1403) (Streptococcus lactis)).